A 982-amino-acid chain; its full sequence is Probable beta-galactosidase C (982 aa).

The N-terminal stretch at 1–21 (MRLFALLPVLLGLISSHFVSA) is a signal peptide. Residues Tyr-80, Asn-125, Ala-126, Glu-127, and Asn-185 each coordinate substrate. Glu-186 acts as the Proton donor in catalysis. A substrate-binding site is contributed by Tyr-249. Cys-255 and Cys-302 are joined by a disulfide. An N-linked (GlcNAc...) asparagine glycan is attached at Asn-274. Glu-285 (nucleophile) is an active-site residue. Tyr-351 contacts substrate. Asn-389, Asn-434, Asn-600, Asn-675, Asn-718, and Asn-785 each carry an N-linked (GlcNAc...) asparagine glycan.

This sequence belongs to the glycosyl hydrolase 35 family.

The protein resides in the secreted. The catalysed reaction is Hydrolysis of terminal non-reducing beta-D-galactose residues in beta-D-galactosides.. Functionally, cleaves beta-linked terminal galactosyl residues from gangliosides, glycoproteins, and glycosaminoglycans. This chain is Probable beta-galactosidase C (lacC), found in Penicillium rubens (strain ATCC 28089 / DSM 1075 / NRRL 1951 / Wisconsin 54-1255) (Penicillium chrysogenum).